A 215-amino-acid chain; its full sequence is Glutathione S-transferase D6 (215 aa).

Positions Met1–Asp80 constitute a GST N-terminal domain. Glutathione is bound by residues Ser9, His50–Ile52, and Glu64–Arg66. The GST C-terminal domain maps to Asp86–Phe206.

Belongs to the GST superfamily. Delta family. Homodimer.

It catalyses the reaction RX + glutathione = an S-substituted glutathione + a halide anion + H(+). In terms of biological role, conjugation of reduced glutathione to a wide number of exogenous and endogenous hydrophobic electrophiles. May be involved in detoxification. This is Glutathione S-transferase D6 from Drosophila melanogaster (Fruit fly).